Reading from the N-terminus, the 526-residue chain is Adenylyl cyclase-associated protein (526 aa).

The segment at 1 to 168 (MPDSKYTMQG…RQSKYFAYLS (168 aa)) is adenyl cyclase-binding. Disordered regions lie at residues 43–72 (EASKNNKPSDSGADANTTNEPSAENAPEVE), 255–304 (QSTK…DANK), and 326–371 (KVDK…RPPR). Positions 45–64 (SKNNKPSDSGADANTTNEPS) are enriched in polar residues. Positions 169–369 (ALSEGAPLFS…KPSTLKTKRP (201 aa)) match the SH3-binding motif. A compositionally biased stretch (low complexity) spans 262–274 (ATSSPSPASATAA). Pro residues predominate over residues 275–285 (PAPPPPPPAPP). The segment covering 290 to 302 (EISNDTPATSSDA) has biased composition (polar residues). The span at 326 to 338 (KVDKSQQTHKNPE) shows a compositional bias: basic and acidic residues. A compositionally biased stretch (low complexity) spans 342-352 (SSTVSSTGSKS). The segment at 354 to 361 (PPPRPKKP) is interaction with SH3 domain of ABP1. Basic residues predominate over residues 357–370 (RPKKPSTLKTKRPP). A C-CAP/cofactor C-like domain is found at 369 to 504 (PPRKELVGNK…EDDDYVEFPI (136 aa)). Residues 370-526 (PRKELVGNKW…FKSAVFEHAG (157 aa)) form a dimerization and actin-binding region. Residue S454 is modified to Phosphoserine.

It belongs to the CAP family. As to quaternary structure, homodimer.

The protein localises to the cytoplasm. It is found in the cytoskeleton. It localises to the actin patch. The N-terminal domain binds to adenylyl cyclase, thereby enabling adenylyl cyclase to be activated by upstream regulatory signals, such as Ras. The C-terminal domain is required for normal cellular morphology and growth control. The sequence is that of Adenylyl cyclase-associated protein (SRV2) from Saccharomyces cerevisiae (strain ATCC 204508 / S288c) (Baker's yeast).